The sequence spans 210 residues: Large ribosomal subunit protein bL9 (210 aa).

Positions 172–210 (EAAAAALEPDSEEEFEAATPPSELAAEASDEDADDAKEA) are disordered. Positions 199–210 (ASDEDADDAKEA) are enriched in acidic residues.

The protein belongs to the bacterial ribosomal protein bL9 family.

In terms of biological role, binds to the 23S rRNA. This Sphingopyxis alaskensis (strain DSM 13593 / LMG 18877 / RB2256) (Sphingomonas alaskensis) protein is Large ribosomal subunit protein bL9.